The sequence spans 713 residues: Cadherin-13 (713 aa).

Positions 1–22 (MQPRTPLVLCVLLSQVLLLTSA) are cleaved as a signal peptide. The propeptide occupies 23–138 (EDLDCIPGFQ…RTSPVPRQKR (116 aa)). N-linked (GlcNAc...) asparagine glycans are attached at residues Asn-52 and Asn-86. Cadherin domains are found at residues 139 to 245 (SIVV…RPIF), 246 to 363 (REGP…SPKF), 364 to 477 (TKKE…GPVF), 478 to 585 (YPDP…APFI), and 584 to 690 (FIYP…VDSN). 7 N-linked (GlcNAc...) asparagine glycosylation sites follow: Asn-382, Asn-489, Asn-500, Asn-530, Asn-598, Asn-638, and Asn-671. A lipid anchor (GPI-anchor amidated asparagine) is attached at Asn-690. The propeptide at 691–713 (AVGALRFSLPSLLLLSLFSLACL) is removed in mature form.

By contrast to classical cadherins, homodimerization in trans is not mediated by cadherin EC1 domain strand-swapping, but instead through a homophilic adhesive interface which joins two elongated EC1-EC2 domains through a region near their Ca2+-binding sites to form a tetrahedral, X-like shape.

The protein resides in the cell membrane. Its subcellular location is the cytoplasm. Cadherins are calcium-dependent cell adhesion proteins. They preferentially interact with themselves in a homophilic manner in connecting cells; cadherins may thus contribute to the sorting of heterogeneous cell types. May act as a negative regulator of neural cell growth. The chain is Cadherin-13 (CDH13) from Pongo abelii (Sumatran orangutan).